The chain runs to 202 residues: Nucleoside triphosphate pyrophosphatase (202 aa).

The Proton acceptor role is filled by Asp79.

The protein belongs to the Maf family. A divalent metal cation is required as a cofactor.

It is found in the cytoplasm. The enzyme catalyses a ribonucleoside 5'-triphosphate + H2O = a ribonucleoside 5'-phosphate + diphosphate + H(+). It carries out the reaction a 2'-deoxyribonucleoside 5'-triphosphate + H2O = a 2'-deoxyribonucleoside 5'-phosphate + diphosphate + H(+). Its function is as follows. Nucleoside triphosphate pyrophosphatase. May have a dual role in cell division arrest and in preventing the incorporation of modified nucleotides into cellular nucleic acids. In Rhodopseudomonas palustris (strain BisB5), this protein is Nucleoside triphosphate pyrophosphatase.